Consider the following 178-residue polypeptide: Interleukin-10 (178 aa).

The first 18 residues, 1-18 (MHSSALLCCLVVLTGVRA), serve as a signal peptide directing secretion. Disulfide bonds link Cys30–Cys126 and Cys80–Cys132. The N-linked (GlcNAc...) asparagine glycan is linked to Asn134.

Belongs to the IL-10 family. As to quaternary structure, homodimer. Interacts with IL10RA and IL10RB.

The protein resides in the secreted. Major immune regulatory cytokine that acts on many cells of the immune system where it has profound anti-inflammatory functions, limiting excessive tissue disruption caused by inflammation. Mechanistically, IL10 binds to its heterotetrameric receptor comprising IL10RA and IL10RB leading to JAK1 and STAT2-mediated phosphorylation of STAT3. In turn, STAT3 translocates to the nucleus where it drives expression of anti-inflammatory mediators. Targets antigen-presenting cells (APCs) such as macrophages and monocytes and inhibits their release of pro-inflammatory cytokines including granulocyte-macrophage colony-stimulating factor /GM-CSF, granulocyte colony-stimulating factor/G-CSF, IL-1 alpha, IL-1 beta, IL-6, IL-8 and TNF-alpha. Also interferes with antigen presentation by reducing the expression of MHC-class II and co-stimulatory molecules, thereby inhibiting their ability to induce T cell activation. In addition, controls the inflammatory response of macrophages by reprogramming essential metabolic pathways including mTOR signaling. This chain is Interleukin-10 (IL10), found in Papio hamadryas (Hamadryas baboon).